The sequence spans 138 residues: Large ribosomal subunit protein uL16 (138 aa).

It belongs to the universal ribosomal protein uL16 family. Part of the 50S ribosomal subunit.

Its function is as follows. Binds 23S rRNA and is also seen to make contacts with the A and possibly P site tRNAs. In Chlamydia felis (strain Fe/C-56) (Chlamydophila felis), this protein is Large ribosomal subunit protein uL16.